A 448-amino-acid polypeptide reads, in one-letter code: N-succinylarginine dihydrolase (448 aa).

Residues 19–28, asparagine 110, and 137–138 contribute to the substrate site; these read AGLSYGNVAS and HR. Residue glutamate 174 is part of the active site. Arginine 214 is a binding site for substrate. The active site involves histidine 250. Substrate is bound by residues aspartate 252 and asparagine 364. The Nucleophile role is filled by cysteine 370.

It belongs to the succinylarginine dihydrolase family. As to quaternary structure, homodimer.

It catalyses the reaction N(2)-succinyl-L-arginine + 2 H2O + 2 H(+) = N(2)-succinyl-L-ornithine + 2 NH4(+) + CO2. It functions in the pathway amino-acid degradation; L-arginine degradation via AST pathway; L-glutamate and succinate from L-arginine: step 2/5. Its function is as follows. Catalyzes the hydrolysis of N(2)-succinylarginine into N(2)-succinylornithine, ammonia and CO(2). This chain is N-succinylarginine dihydrolase, found in Pseudoalteromonas translucida (strain TAC 125).